Consider the following 234-residue polypeptide: 1-(5-phosphoribosyl)-5-[(5-phosphoribosylamino)methylideneamino] imidazole-4-carboxamide isomerase (234 aa).

Asp-9 acts as the Proton acceptor in catalysis. Residue Asp-131 is the Proton donor of the active site.

The protein belongs to the HisA/HisF family.

It is found in the cytoplasm. It catalyses the reaction 1-(5-phospho-beta-D-ribosyl)-5-[(5-phospho-beta-D-ribosylamino)methylideneamino]imidazole-4-carboxamide = 5-[(5-phospho-1-deoxy-D-ribulos-1-ylimino)methylamino]-1-(5-phospho-beta-D-ribosyl)imidazole-4-carboxamide. It participates in amino-acid biosynthesis; L-histidine biosynthesis; L-histidine from 5-phospho-alpha-D-ribose 1-diphosphate: step 4/9. This is 1-(5-phosphoribosyl)-5-[(5-phosphoribosylamino)methylideneamino] imidazole-4-carboxamide isomerase from Staphylococcus epidermidis (strain ATCC 35984 / DSM 28319 / BCRC 17069 / CCUG 31568 / BM 3577 / RP62A).